The chain runs to 629 residues: tRNA uridine 5-carboxymethylaminomethyl modification enzyme MnmG (629 aa).

FAD-binding positions include 13–18 (GGGHAG), Val125, and Ser180. 273–287 (GPRYCPSIEDKVMRF) is an NAD(+) binding site. Gln370 lines the FAD pocket.

This sequence belongs to the MnmG family. As to quaternary structure, homodimer. Heterotetramer of two MnmE and two MnmG subunits. It depends on FAD as a cofactor.

It localises to the cytoplasm. Functionally, NAD-binding protein involved in the addition of a carboxymethylaminomethyl (cmnm) group at the wobble position (U34) of certain tRNAs, forming tRNA-cmnm(5)s(2)U34. In Salmonella paratyphi C (strain RKS4594), this protein is tRNA uridine 5-carboxymethylaminomethyl modification enzyme MnmG.